The chain runs to 447 residues: tRNA modification GTPase MnmE (447 aa).

The (6S)-5-formyl-5,6,7,8-tetrahydrofolate site is built by Arg-24, Glu-81, and Lys-120. In terms of domain architecture, TrmE-type G spans 216 to 371 (GLNVAIAGKP…LRKELSNISG (156 aa)). Asn-226 contacts K(+). Residues 226–231 (NAGKSS), 245–251 (TDIAGTT), and 270–273 (DTAG) each bind GTP. Ser-230 lines the Mg(2+) pocket. 3 residues coordinate K(+): Thr-245, Ile-247, and Thr-250. Position 251 (Thr-251) interacts with Mg(2+). Lys-447 lines the (6S)-5-formyl-5,6,7,8-tetrahydrofolate pocket.

The protein belongs to the TRAFAC class TrmE-Era-EngA-EngB-Septin-like GTPase superfamily. TrmE GTPase family. Homodimer. Heterotetramer of two MnmE and two MnmG subunits. K(+) is required as a cofactor.

The protein resides in the cytoplasm. Its function is as follows. Exhibits a very high intrinsic GTPase hydrolysis rate. Involved in the addition of a carboxymethylaminomethyl (cmnm) group at the wobble position (U34) of certain tRNAs, forming tRNA-cmnm(5)s(2)U34. This Vesicomyosocius okutanii subsp. Calyptogena okutanii (strain HA) protein is tRNA modification GTPase MnmE.